The sequence spans 247 residues: 14-3-3 protein gamma-1 (247 aa).

The protein belongs to the 14-3-3 family. In terms of assembly, homodimer, and heterodimer with other family members.

The protein localises to the cytoplasm. Functionally, adapter protein implicated in the regulation of a large spectrum of both general and specialized signaling pathways. Binds to a large number of partners, usually by recognition of a phosphoserine or phosphothreonine motif. Binding generally results in the modulation of the activity of the binding partner. This chain is 14-3-3 protein gamma-1 (ywhag1), found in Danio rerio (Zebrafish).